The primary structure comprises 629 residues: 1-deoxy-D-xylulose-5-phosphate synthase (629 aa).

Thiamine diphosphate is bound by residues histidine 78 and 119–121 (AHS). Position 150 (aspartate 150) interacts with Mg(2+). Thiamine diphosphate-binding positions include 151–152 (GA), asparagine 179, tyrosine 286, and glutamate 368. Asparagine 179 lines the Mg(2+) pocket.

It belongs to the transketolase family. DXPS subfamily. In terms of assembly, homodimer. Mg(2+) serves as cofactor. The cofactor is thiamine diphosphate.

It catalyses the reaction D-glyceraldehyde 3-phosphate + pyruvate + H(+) = 1-deoxy-D-xylulose 5-phosphate + CO2. It participates in metabolic intermediate biosynthesis; 1-deoxy-D-xylulose 5-phosphate biosynthesis; 1-deoxy-D-xylulose 5-phosphate from D-glyceraldehyde 3-phosphate and pyruvate: step 1/1. In terms of biological role, catalyzes the acyloin condensation reaction between C atoms 2 and 3 of pyruvate and glyceraldehyde 3-phosphate to yield 1-deoxy-D-xylulose-5-phosphate (DXP). This chain is 1-deoxy-D-xylulose-5-phosphate synthase, found in Acidovorax ebreus (strain TPSY) (Diaphorobacter sp. (strain TPSY)).